The chain runs to 518 residues: Serine/threonine-protein kinase PRR1 (518 aa).

Residue Met-1 is modified to N-acetylmethionine. Positions 1–12 (MDEYSSIYSQPK) are enriched in polar residues. The tract at residues 1-59 (MDEYSSIYSQPKTPRLKQEGFPDSIGDQHEKALIDENGEEDKKMASTEGTTGDSRSTPL) is disordered. A compositionally biased stretch (basic and acidic residues) spans 16–45 (LKQEGFPDSIGDQHEKALIDENGEEDKKMA). The span at 47–59 (TEGTTGDSRSTPL) shows a compositional bias: polar residues. Ser-132 is modified (phosphoserine). Positions 192–508 (WKKVRPIGSG…INEIYESPFV (317 aa)) constitute a Protein kinase domain. Residues 198 to 206 (IGSGNFSTV) and Lys-225 each bind ATP. Asp-354 acts as the Proton acceptor in catalysis.

It belongs to the protein kinase superfamily. CAMK Ser/Thr protein kinase family. NIM1 subfamily.

The protein localises to the cytoplasm. It catalyses the reaction L-seryl-[protein] + ATP = O-phospho-L-seryl-[protein] + ADP + H(+). It carries out the reaction L-threonyl-[protein] + ATP = O-phospho-L-threonyl-[protein] + ADP + H(+). Its function is as follows. Protein kinase that functions as a regulator in the pheromone-induced mating pathway downstream of mitogen-activated protein kinase (MAPK) FUS3. Diminishes transcriptional induction of genes in response to pheromone signaling. The polypeptide is Serine/threonine-protein kinase PRR1 (PRR1) (Saccharomyces cerevisiae (strain ATCC 204508 / S288c) (Baker's yeast)).